A 115-amino-acid polypeptide reads, in one-letter code: Large ribosomal subunit protein bL20 (115 aa).

This sequence belongs to the bacterial ribosomal protein bL20 family.

Functionally, binds directly to 23S ribosomal RNA and is necessary for the in vitro assembly process of the 50S ribosomal subunit. It is not involved in the protein synthesizing functions of that subunit. In Chlorobium phaeobacteroides (strain DSM 266 / SMG 266 / 2430), this protein is Large ribosomal subunit protein bL20.